The following is a 351-amino-acid chain: uncharacterized protein (351 aa).

5 residues coordinate Mn(2+): aspartate 215, aspartate 226, histidine 290, glutamate 319, and glutamate 333.

The protein belongs to the peptidase M24B family. Mn(2+) is required as a cofactor.

This is an uncharacterized protein from Staphylococcus aureus (strain USA300).